Consider the following 451-residue polypeptide: Probable DNA polymerase delta small subunit (451 aa).

The protein belongs to the DNA polymerase delta/II small subunit family. As to quaternary structure, heterodimer with subunits of 125 kDa and 50 kDa.

It is found in the nucleus. The enzyme catalyses DNA(n) + a 2'-deoxyribonucleoside 5'-triphosphate = DNA(n+1) + diphosphate. In terms of biological role, the function of the small subunit is not yet clear. This is Probable DNA polymerase delta small subunit from Caenorhabditis elegans.